We begin with the raw amino-acid sequence, 318 residues long: Transaldolase (318 aa).

Lys-132 serves as the catalytic Schiff-base intermediate with substrate.

This sequence belongs to the transaldolase family. Type 1 subfamily. As to quaternary structure, homodimer.

Its subcellular location is the cytoplasm. The enzyme catalyses D-sedoheptulose 7-phosphate + D-glyceraldehyde 3-phosphate = D-erythrose 4-phosphate + beta-D-fructose 6-phosphate. It participates in carbohydrate degradation; pentose phosphate pathway; D-glyceraldehyde 3-phosphate and beta-D-fructose 6-phosphate from D-ribose 5-phosphate and D-xylulose 5-phosphate (non-oxidative stage): step 2/3. In terms of biological role, transaldolase is important for the balance of metabolites in the pentose-phosphate pathway. This Shewanella baltica (strain OS185) protein is Transaldolase.